The primary structure comprises 420 residues: Histidine--tRNA ligase (420 aa).

It belongs to the class-II aminoacyl-tRNA synthetase family. Homodimer.

The protein localises to the cytoplasm. The enzyme catalyses tRNA(His) + L-histidine + ATP = L-histidyl-tRNA(His) + AMP + diphosphate + H(+). The protein is Histidine--tRNA ligase of Desulforudis audaxviator (strain MP104C).